We begin with the raw amino-acid sequence, 524 residues long: Chromosomal replication initiator protein DnaA (524 aa).

The domain I, interacts with DnaA modulators stretch occupies residues 1 to 85; that stretch reads MSQNSSSLLE…TRVLSLRMGR (85 aa). A domain II region spans residues 85–182; the sequence is RSFSLAVSVE…TPAHNPNREV (98 aa). The interval 95 to 183 is disordered; sequence PEQEIPETPA…PAHNPNREVS (89 aa). Pro residues predominate over residues 148–158; it reads APEPHPAPIAD. A domain III, AAA+ region region spans residues 183 to 399; sequence SLNPKYTFES…GALIRVSAYS (217 aa). ATP-binding residues include G227, G229, K230, and T231. The tract at residues 400–524 is domain IV, binds dsDNA; sequence SLINQPIDKE…TQLIKSRGRN (125 aa).

Belongs to the DnaA family. Oligomerizes as a right-handed, spiral filament on DNA at oriC.

The protein localises to the cytoplasm. Its function is as follows. Plays an essential role in the initiation and regulation of chromosomal replication. ATP-DnaA binds to the origin of replication (oriC) to initiate formation of the DNA replication initiation complex once per cell cycle. Binds the DnaA box (a 9 base pair repeat at the origin) and separates the double-stranded (ds)DNA. Forms a right-handed helical filament on oriC DNA; dsDNA binds to the exterior of the filament while single-stranded (ss)DNA is stabiized in the filament's interior. The ATP-DnaA-oriC complex binds and stabilizes one strand of the AT-rich DNA unwinding element (DUE), permitting loading of DNA polymerase. After initiation quickly degrades to an ADP-DnaA complex that is not apt for DNA replication. Binds acidic phospholipids. This is Chromosomal replication initiator protein DnaA from Corynebacterium glutamicum (strain ATCC 13032 / DSM 20300 / JCM 1318 / BCRC 11384 / CCUG 27702 / LMG 3730 / NBRC 12168 / NCIMB 10025 / NRRL B-2784 / 534).